The following is a 432-amino-acid chain: Adenylosuccinate synthetase (432 aa).

Residues 13 to 19 (GDEGKGK) and 41 to 43 (GHT) contribute to the GTP site. Aspartate 14 (proton acceptor) is an active-site residue. Mg(2+) contacts are provided by aspartate 14 and glycine 41. IMP contacts are provided by residues 14 to 17 (DEGK), 39 to 42 (NAGH), threonine 130, arginine 144, glutamine 225, threonine 240, and arginine 304. The active-site Proton donor is histidine 42. 300-306 (ATTGRKR) contributes to the substrate binding site. Residues arginine 306, 332–334 (KLD), and 415–417 (STG) each bind GTP.

Belongs to the adenylosuccinate synthetase family. In terms of assembly, homodimer. It depends on Mg(2+) as a cofactor.

The protein resides in the cytoplasm. The enzyme catalyses IMP + L-aspartate + GTP = N(6)-(1,2-dicarboxyethyl)-AMP + GDP + phosphate + 2 H(+). The protein operates within purine metabolism; AMP biosynthesis via de novo pathway; AMP from IMP: step 1/2. Plays an important role in the de novo pathway of purine nucleotide biosynthesis. Catalyzes the first committed step in the biosynthesis of AMP from IMP. The chain is Adenylosuccinate synthetase from Tolumonas auensis (strain DSM 9187 / NBRC 110442 / TA 4).